The chain runs to 191 residues: General negative regulator of transcription subunit 2 (191 aa).

It belongs to the CNOT2/3/5 family. As to quaternary structure, forms a NOT protein complex that comprises NOT1, NOT2, NOT3, NOT4 and NOT5. Subunit of the 1.0 MDa CCR4-NOT core complex that contains CCR4, CAF1, NOT1, NOT2, NOT3, NOT4, NOT5, CAF40 and CAF130. In the complex interacts with NOT1 and NOT5. The core complex probably is part of a less characterized 1.9 MDa CCR4-NOT complex.

Its subcellular location is the cytoplasm. The protein resides in the nucleus. Functionally, acts as a component of the CCR4-NOT core complex, which in the nucleus seems to be a general transcription factor, and in the cytoplasm the major mRNA deadenylase involved in mRNA turnover. NOT2 is required for the integrity of the complex. The NOT protein subcomplex negatively regulates the basal and activated transcription of many genes. Preferentially affects TC-type TATA element-dependent transcription. Could directly or indirectly inhibit component(s) of the general transcription machinery. This Saccharomyces cerevisiae (strain ATCC 204508 / S288c) (Baker's yeast) protein is General negative regulator of transcription subunit 2 (CDC36).